Reading from the N-terminus, the 46-residue chain is Large ribosomal subunit protein bL36 (46 aa).

This sequence belongs to the bacterial ribosomal protein bL36 family.

The polypeptide is Large ribosomal subunit protein bL36 (Salmonella agona (strain SL483)).